The primary structure comprises 201 residues: Inosine triphosphate pyrophosphatase (201 aa).

13-18 provides a ligand contact to ITP; it reads TGNAKK. Glu-43 is a Mg(2+) binding site. Residues Lys-55, 71–72, Lys-88, 148–151, Lys-171, and 176–177 contribute to the ITP site; these read DT, FGWD, and HR.

It belongs to the HAM1 NTPase family. Homodimer. Mg(2+) serves as cofactor. Requires Mn(2+) as cofactor.

The protein resides in the cytoplasm. The enzyme catalyses ITP + H2O = IMP + diphosphate + H(+). The catalysed reaction is dITP + H2O = dIMP + diphosphate + H(+). It catalyses the reaction XTP + H2O = XMP + diphosphate + H(+). It carries out the reaction N(6)-hydroxy-dATP + H2O = N(6)-hydroxy-dAMP + diphosphate + H(+). Its function is as follows. Pyrophosphatase that hydrolyzes the non-canonical purine nucleotides inosine triphosphate (ITP), deoxyinosine triphosphate (dITP) as well as 2'-deoxy-N-6-hydroxylaminopurine triphosphate (dHAPTP) and xanthosine 5'-triphosphate (XTP) to their respective monophosphate derivatives. The enzyme does not distinguish between the deoxy- and ribose forms. Probably excludes non-canonical purines from RNA and DNA precursor pools, thus preventing their incorporation into RNA and DNA and avoiding chromosomal lesions. In Gallus gallus (Chicken), this protein is Inosine triphosphate pyrophosphatase.